Consider the following 524-residue polypeptide: Maturase K (524 aa).

This sequence belongs to the intron maturase 2 family. MatK subfamily.

It localises to the plastid. The protein localises to the chloroplast. Its function is as follows. Usually encoded in the trnK tRNA gene intron. Probably assists in splicing its own and other chloroplast group II introns. The polypeptide is Maturase K (Welwitschia mirabilis (Tree tumbo)).